The sequence spans 179 residues: ATP synthase subunit delta (179 aa).

It belongs to the ATPase delta chain family. In terms of assembly, F-type ATPases have 2 components, F(1) - the catalytic core - and F(0) - the membrane proton channel. F(1) has five subunits: alpha(3), beta(3), gamma(1), delta(1), epsilon(1). F(0) has three main subunits: a(1), b(2) and c(10-14). The alpha and beta chains form an alternating ring which encloses part of the gamma chain. F(1) is attached to F(0) by a central stalk formed by the gamma and epsilon chains, while a peripheral stalk is formed by the delta and b chains.

The protein localises to the cell membrane. Its function is as follows. F(1)F(0) ATP synthase produces ATP from ADP in the presence of a proton or sodium gradient. F-type ATPases consist of two structural domains, F(1) containing the extramembraneous catalytic core and F(0) containing the membrane proton channel, linked together by a central stalk and a peripheral stalk. During catalysis, ATP synthesis in the catalytic domain of F(1) is coupled via a rotary mechanism of the central stalk subunits to proton translocation. Functionally, this protein is part of the stalk that links CF(0) to CF(1). It either transmits conformational changes from CF(0) to CF(1) or is implicated in proton conduction. This Clostridium acetobutylicum (strain ATCC 824 / DSM 792 / JCM 1419 / IAM 19013 / LMG 5710 / NBRC 13948 / NRRL B-527 / VKM B-1787 / 2291 / W) protein is ATP synthase subunit delta.